The sequence spans 65 residues: Antitoxin VapB32 (65 aa).

Residues 46–65 (ALGGTDPQATAAPRRRTSPR) form a disordered region.

Antitoxin component of a type II toxin-antitoxin (TA) system. The polypeptide is Antitoxin VapB32 (vapB32) (Mycobacterium tuberculosis (strain CDC 1551 / Oshkosh)).